We begin with the raw amino-acid sequence, 426 residues long: Glucose-6-phosphate isomerase (426 aa).

The Proton donor role is filled by glutamate 282. Catalysis depends on residues histidine 303 and lysine 417.

Belongs to the GPI family.

It localises to the cytoplasm. The catalysed reaction is alpha-D-glucose 6-phosphate = beta-D-fructose 6-phosphate. It functions in the pathway carbohydrate biosynthesis; gluconeogenesis. Its pathway is carbohydrate degradation; glycolysis; D-glyceraldehyde 3-phosphate and glycerone phosphate from D-glucose: step 2/4. Its function is as follows. Catalyzes the reversible isomerization of glucose-6-phosphate to fructose-6-phosphate. The sequence is that of Glucose-6-phosphate isomerase from Onion yellows phytoplasma (strain OY-M).